The chain runs to 346 residues: Leucine zipper protein 2 (346 aa).

The N-terminal stretch at 1 to 19 is a signal peptide; it reads MKFSPAHYLLPLLPALVLS. The stretch at 16–211 forms a coiled coil; the sequence is LVLSTRQDYE…QMKAMKETVQ (196 aa). N-linked (GlcNAc...) asparagine glycosylation occurs at N133. The segment at 164–192 is leucine-zipper; that stretch reads LRYGKKDLLFKAQQLTDLEQKLAVAKNEL. Disordered stretches follow at residues 221–240 and 248–346; these read QPPP…LLPP and PDAA…EKIL. Residues 250 to 261 show a composition bias toward low complexity; the sequence is AAAKSKPQQSAS. A compositionally biased stretch (polar residues) spans 262 to 283; that stretch reads GNNESSQVESTKEGNPSTTACD. N-linked (GlcNAc...) asparagine glycosylation occurs at N264. A compositionally biased stretch (basic and acidic residues) spans 286 to 298; the sequence is DEGRPCSMKHKES. Residue N302 is glycosylated (N-linked (GlcNAc...) asparagine).

It is found in the secreted. The sequence is that of Leucine zipper protein 2 (LUZP2) from Homo sapiens (Human).